We begin with the raw amino-acid sequence, 268 residues long: ClpXP adapter protein SpxH (268 aa).

Belongs to the SpxH family. As to quaternary structure, interacts with Spx.

Its subcellular location is the cytoplasm. Adapter protein required for efficient degradation of Spx by ClpXP under non-stress conditions. Interaction with Spx stabilizes Spx and exposes the C-terminus of Spx for recognition and proteolysis by ClpXP. This is ClpXP adapter protein SpxH from Staphylococcus aureus (strain MRSA252).